The primary structure comprises 610 residues: Pentatricopeptide repeat-containing protein At3g15590, mitochondrial (610 aa).

A mitochondrion-targeting transit peptide spans 1–71 (MYSLSRILQR…FSRFFGIHKL (71 aa)). The disordered stretch occupies residues 88 to 142 (EELSESEEAVPVSGDVPEGVVDDDSLFEPELGSDNDDLEIEEKHSKDGGKPTKKR). Residues 107–127 (VVDDDSLFEPELGSDNDDLEI) are compositionally biased toward acidic residues. The segment covering 128–137 (EEKHSKDGGK) has biased composition (basic and acidic residues). 9 PPR repeats span residues 241 to 275 (GEVV…KFPT), 276 to 309 (SVFA…NIKP), 310 to 344 (SRAT…GIEL), 345 to 379 (DPEL…GLQQ), 380 to 410 (TPWV…VDQN), 412 to 442 (RYDN…LVEK), 447 to 481 (PMMP…GIAI), 482 to 517 (GPST…KMRP), and 518 to 552 (MFTT…SYAA).

The protein belongs to the PPR family. P subfamily.

Its subcellular location is the mitochondrion. The chain is Pentatricopeptide repeat-containing protein At3g15590, mitochondrial from Arabidopsis thaliana (Mouse-ear cress).